The sequence spans 29 residues: Cyclotide mela-1 (29 aa).

The cyclopeptide (Gly-Asp) cross-link spans 1 to 29 (GKYTCGETCFKGKCYTPGCTCSYPICKKD). 3 disulfides stabilise this stretch: cysteine 5-cysteine 19, cysteine 9-cysteine 21, and cysteine 14-cysteine 26.

In terms of processing, this is a cyclic peptide. Post-translationally, contains 3 disulfide bonds.

In terms of biological role, probably participates in a plant defense mechanism (Potential). Binds to and induces leakage in phospholipd membranes, particularly ones containing 1-palmitoyl-2-oleophosphatidylethanolamine (POPE). In vitro, displays cytotoxicity against cultured cells but no hemolytic activity towards fresh erythrocytes. Not active against Gram-negative bacterium E.coli ATCC 25922 or Gram-positive bacterium S.aureus ATCC 25923 up to a concentration of 64 uM. The protein is Cyclotide mela-1 of Melicytus latifolius (Norfolk Island mahoe).